We begin with the raw amino-acid sequence, 486 residues long: Glycogen synthase (486 aa).

K15 serves as a coordination point for ADP-alpha-D-glucose.

It belongs to the glycosyltransferase 1 family. Bacterial/plant glycogen synthase subfamily.

It carries out the reaction [(1-&gt;4)-alpha-D-glucosyl](n) + ADP-alpha-D-glucose = [(1-&gt;4)-alpha-D-glucosyl](n+1) + ADP + H(+). The protein operates within glycan biosynthesis; glycogen biosynthesis. Its function is as follows. Synthesizes alpha-1,4-glucan chains using ADP-glucose. This Thermotoga petrophila (strain ATCC BAA-488 / DSM 13995 / JCM 10881 / RKU-1) protein is Glycogen synthase.